Reading from the N-terminus, the 577-residue chain is MNIQSILSNKIKQAMRQAGADEQCDALVKPSSKPQFGDYQANGIMATAKKLGLNPRDFAQKVLDLIDLKNIAEKMEIAGPGFINIFLDKNWLAENIQVTLQDKKLGVTVEEIQTIVVDYSSPNVAKEMHVGHLRSTIIGDAVVRTLEFLGHNVIRANHVGDWGTQFGMLIAYLEKMENEHASAMELADLEAFYRAAKEHYDNDETFAEKARNYVVKLQNGDAYCRTMWKKLVDITMQQNQRNYDRLNVTLTQNDVMGESLYNPMLPEIVADLKAQGLAVEDEGAQVVYLEEFKNKDGDPMGVIVQKKDGGFLYTTTDIAAAKYRYHTLKADRALVFSDTRQSQHMQQAWLITRKAGYVPDSFQLEHKNFGMMLGKDGKPFKTRSGGTVKLTDLLDEAIERADKLISEKSTALSSKEKAAVIEAVGIGSVKYADLSKNRTTDYVFDWDIMLSFEGNTAPYMQYAYTRIRSIFNKTDISEEQLHPAKIQLTDEKERLLAIKLLQFEETVQIVGKEGTPHILCAYLYELAGLFSSFYEHCPILNNDNENVKLSRLKLALLTEKTLKQGLDLLGIKTVEKM.

Residues 122 to 132 (PNVAKEMHVGH) carry the 'HIGH' region motif.

It belongs to the class-I aminoacyl-tRNA synthetase family. As to quaternary structure, monomer.

Its subcellular location is the cytoplasm. The catalysed reaction is tRNA(Arg) + L-arginine + ATP = L-arginyl-tRNA(Arg) + AMP + diphosphate. This Histophilus somni (strain 2336) (Haemophilus somnus) protein is Arginine--tRNA ligase.